Reading from the N-terminus, the 230-residue chain is MRIIGLTGGIATGKSTVARILERHGIPVADADQMARQALAVGSPIRERVLQRYGRAIQDPSGALDRRQLGRIVFADAAERAWLEAQIHPFVKARLREFLEAHGASAPPEEATEARPSCQCPHGEGHPTVCLMIPLLFEAHMENWASEIWVVTCTPEQQRQRLAQRDLLTAAEIEARLASQWPLEEKARRAHVVLDNSGSLAQLEAQVRQALGAHPREGGAICPTPPSRIE.

In terms of domain architecture, DPCK spans 3 to 225 (IIGLTGGIAT…REGGAICPTP (223 aa)). An ATP-binding site is contributed by 11–16 (ATGKST).

It belongs to the CoaE family.

The protein localises to the cytoplasm. It carries out the reaction 3'-dephospho-CoA + ATP = ADP + CoA + H(+). Its pathway is cofactor biosynthesis; coenzyme A biosynthesis; CoA from (R)-pantothenate: step 5/5. Catalyzes the phosphorylation of the 3'-hydroxyl group of dephosphocoenzyme A to form coenzyme A. This is Dephospho-CoA kinase from Synechococcus sp. (strain JA-3-3Ab) (Cyanobacteria bacterium Yellowstone A-Prime).